A 328-amino-acid polypeptide reads, in one-letter code: B3 domain-containing protein At5g60140 (328 aa).

Residues 13–109 (SKFFKPYLPS…FFNFSIFDHE (97 aa)) constitute a DNA-binding region (TF-B3). The interval 145–221 (LNSDDSDDSD…EDEDDLEDED (77 aa)) is disordered. Acidic residues-rich tracts occupy residues 148 to 182 (DDSDDSDNDYSVEDDNVAEDDDGLEDEVDVEAEDG) and 190 to 221 (GLEDEDDDEAEDGYDAKDDDGLEDEDDLEDED).

The protein localises to the nucleus. This chain is B3 domain-containing protein At5g60140, found in Arabidopsis thaliana (Mouse-ear cress).